Here is a 488-residue protein sequence, read N- to C-terminus: UDP-N-acetylmuramoyl-L-alanyl-D-glutamate--2,6-diaminopimelate ligase (488 aa).

UDP-N-acetyl-alpha-D-muramoyl-L-alanyl-D-glutamate contacts are provided by residues leucine 24, serine 26, and 41 to 43; that span reads HQV. Residue 113 to 119 coordinates ATP; sequence GTNGKTT. UDP-N-acetyl-alpha-D-muramoyl-L-alanyl-D-glutamate is bound by residues asparagine 154, 155-156, serine 182, glutamine 188, and arginine 190; that span reads TT. Lysine 222 carries the N6-carboxylysine modification. Residues arginine 386, 410-413, glycine 461, and glutamate 465 contribute to the meso-2,6-diaminopimelate site; that span reads DNPR. Residues 410–413 carry the Meso-diaminopimelate recognition motif motif; the sequence is DNPR.

The protein belongs to the MurCDEF family. MurE subfamily. Mg(2+) serves as cofactor. In terms of processing, carboxylation is probably crucial for Mg(2+) binding and, consequently, for the gamma-phosphate positioning of ATP.

It localises to the cytoplasm. The enzyme catalyses UDP-N-acetyl-alpha-D-muramoyl-L-alanyl-D-glutamate + meso-2,6-diaminopimelate + ATP = UDP-N-acetyl-alpha-D-muramoyl-L-alanyl-gamma-D-glutamyl-meso-2,6-diaminopimelate + ADP + phosphate + H(+). It participates in cell wall biogenesis; peptidoglycan biosynthesis. In terms of biological role, catalyzes the addition of meso-diaminopimelic acid to the nucleotide precursor UDP-N-acetylmuramoyl-L-alanyl-D-glutamate (UMAG) in the biosynthesis of bacterial cell-wall peptidoglycan. The protein is UDP-N-acetylmuramoyl-L-alanyl-D-glutamate--2,6-diaminopimelate ligase of Haemophilus influenzae (strain PittGG).